A 52-amino-acid polypeptide reads, in one-letter code: Large ribosomal subunit protein eL39 (52 aa).

Belongs to the eukaryotic ribosomal protein eL39 family. In terms of assembly, interacts with YIH1.

In Encephalitozoon cuniculi (strain GB-M1) (Microsporidian parasite), this protein is Large ribosomal subunit protein eL39 (RPL39).